The following is a 172-amino-acid chain: ATP synthase subunit b (172 aa).

Residues 17-37 form a helical membrane-spanning segment; sequence IVFSAIVLAIVLPFFWWFVIP.

Belongs to the ATPase B chain family. In terms of assembly, F-type ATPases have 2 components, F(1) - the catalytic core - and F(0) - the membrane proton channel. F(1) has five subunits: alpha(3), beta(3), gamma(1), delta(1), epsilon(1). F(0) has three main subunits: a(1), b(2) and c(10-14). The alpha and beta chains form an alternating ring which encloses part of the gamma chain. F(1) is attached to F(0) by a central stalk formed by the gamma and epsilon chains, while a peripheral stalk is formed by the delta and b chains.

The protein localises to the cell membrane. Functionally, f(1)F(0) ATP synthase produces ATP from ADP in the presence of a proton or sodium gradient. F-type ATPases consist of two structural domains, F(1) containing the extramembraneous catalytic core and F(0) containing the membrane proton channel, linked together by a central stalk and a peripheral stalk. During catalysis, ATP synthesis in the catalytic domain of F(1) is coupled via a rotary mechanism of the central stalk subunits to proton translocation. In terms of biological role, component of the F(0) channel, it forms part of the peripheral stalk, linking F(1) to F(0). This chain is ATP synthase subunit b, found in Tropheryma whipplei (strain TW08/27) (Whipple's bacillus).